The sequence spans 237 residues: MRQSGTSQPLLINMYLPDPVGDGLFKEGKSPSWGPLSPAVQKGSGQIQLWQFLLELLADRANAGCIAWEGGHGEFKLTDPDEVARRWGERKSKPNMNYDKLSRALRYYYDKNIMSKVHGKRYAYRFDFQGLAQACQPPPAHAHAAAAAAAAAAAAQDGALYKLPAGLAPLPFPGLSKLNLMAASAGVAPAGFSYWPGPNATAAAAATAALYPTPGLQPPPGPFGAVAAASHLGGHYH.

A DNA-binding region (ETS) is located at residues 47–127 (IQLWQFLLEL…HGKRYAYRFD (81 aa)). A may mediate active transcriptional repression region spans residues 129–237 (QGLAQACQPP…AASHLGGHYH (109 aa)).

It belongs to the ETS family. Expressed in central serotonergic neurons.

The protein resides in the nucleus. Functionally, functions as a transcriptional regulator. May function as a transcriptional repressor. Functions in the differentiation and the maintenance of the central serotonergic neurons. May play a role in cell growth. This chain is Protein FEV (Fev), found in Mus musculus (Mouse).